A 141-amino-acid polypeptide reads, in one-letter code: Large ribosomal subunit protein uL11 (141 aa).

The protein belongs to the universal ribosomal protein uL11 family. Part of the ribosomal stalk of the 50S ribosomal subunit. Interacts with L10 and the large rRNA to form the base of the stalk. L10 forms an elongated spine to which L12 dimers bind in a sequential fashion forming a multimeric L10(L12)X complex. In terms of processing, one or more lysine residues are methylated.

Functionally, forms part of the ribosomal stalk which helps the ribosome interact with GTP-bound translation factors. This is Large ribosomal subunit protein uL11 from Brevibacillus brevis (strain 47 / JCM 6285 / NBRC 100599).